Reading from the N-terminus, the 551-residue chain is TRAF3-interacting JNK-activating modulator (551 aa).

Residues 1–526 (MISPDPRPSP…QLPPRRQCGR (526 aa)) are Cytoplasmic-facing. Disordered stretches follow at residues 73-95 (LEEK…RPGQ) and 140-178 (DHLS…IKND). 2 coiled-coil regions span residues 240 to 436 (DKLK…LLTK) and 464 to 506 (WDLR…RKLQ). Residues 527-544 (WLPVLMVVIAAALAVFLA) form a helical; Anchor for type IV membrane protein membrane-spanning segment. The Extracellular segment spans residues 545-551 (NKDNLMI).

In terms of assembly, interacts (via its coiled-coil domain) with TRAF3 (via isoleucine zipper). Interacts with MAP2K1. Interacts with PPP2CA; this interaction targets PPP2CA to the lysosomes. Interacts with TLR4. Interacts with MAVS. Interacts with TBK1.

It is found in the cell membrane. It localises to the golgi apparatus membrane. The protein resides in the lysosome membrane. The protein localises to the mitochondrion outer membrane. Adapter protein that plays essential roles in both innate and adaptive immunity. Plays a crucial role in the regulation of thymocyte development. Mechanistically, mediates TCR-stimulated activation through recruiting MAP2K1/MEK1 to the Golgi and, thereby, facilitating the interaction of MAP2K1/MEK1 with its activator BRAF. Also plays an essential role in regulatory T-cell stability and function by recruiting the serine-threonine phosphatase catalytic subunit (PPP2CA) to the lysosome, thereby facilitating the interaction of PP2Ac with the mTORC1 component RPTOR and restricting glycolytic metabolism. Positively regulates TLR4 signaling activity in macrophage-mediated inflammation by acting as a molecular clamp to facilitate LPS-induced translocation of TLR4 to lipid rafts. In response to viral infection, facilitates the recruitment of TRAF3 to MAVS within mitochondria leading to IRF3 activation and interferon production. However, participates in the maintenance of immune homeostasis and the prevention of overzealous innate immunity by promoting 'Lys-48'-dependent ubiquitination of TBK1. This Homo sapiens (Human) protein is TRAF3-interacting JNK-activating modulator (TRAF3IP3).